The following is a 200-amino-acid chain: 3-isopropylmalate dehydratase small subunit (200 aa).

This sequence belongs to the LeuD family. LeuD type 1 subfamily. In terms of assembly, heterodimer of LeuC and LeuD.

The catalysed reaction is (2R,3S)-3-isopropylmalate = (2S)-2-isopropylmalate. It participates in amino-acid biosynthesis; L-leucine biosynthesis; L-leucine from 3-methyl-2-oxobutanoate: step 2/4. Catalyzes the isomerization between 2-isopropylmalate and 3-isopropylmalate, via the formation of 2-isopropylmaleate. The polypeptide is 3-isopropylmalate dehydratase small subunit (Saccharopolyspora erythraea (strain ATCC 11635 / DSM 40517 / JCM 4748 / NBRC 13426 / NCIMB 8594 / NRRL 2338)).